The primary structure comprises 235 residues: N-alpha-acetyltransferase 10 (235 aa).

Met-1 is modified (N-acetylmethionine). An interaction with NAA15 region spans residues 1–58; it reads MNIRNARPEDLMNMQHCNLLCLPENYQMKYYFYHGLSWPQLSYIAEDENGKIVGYVLA. The N-acetyltransferase domain maps to 1–152; the sequence is MNIRNARPED…DAYAMKRDLT (152 aa). An N6-acetyllysine; by autocatalysis modification is found at Lys-136. Residues 178–235 are disordered; the sequence is NKVESKGNSPPSSGEACREEKGLAAEDSGGDSKDLSEVSETTESTDVKDSSEASDSAS. Residues Ser-182, Ser-186, and Ser-205 each carry the phosphoserine modification. Residues 193–213 show a composition bias toward basic and acidic residues; it reads ACREEKGLAAEDSGGDSKDLS. Ser-209 is modified (phosphoserine; by IKKB). Phosphoserine occurs at positions 213 and 216.

This sequence belongs to the acetyltransferase family. ARD1 subfamily. In terms of assembly, component of the N-terminal acetyltransferase A complex (also called the NatA complex) composed of NAA10 and NAA15. Within the complex interacts with NAA15. Component of the N-terminal acetyltransferase A (NatA)/HYPK complex at least composed of NAA10, NAA15 and HYPK, which has N-terminal acetyltransferase activity. In complex with NAA15, interacts with HYPK. Component of the N-terminal acetyltransferase E (NatE) complex at least composed of NAA10, NAA15 and NAA50. Within the complex interacts with NAA15; the interaction is required for binding to NAAT50. Interacts with NAAT50. The interaction of the NatA complex with NAA50 reduces the acetylation activity of the NatA complex. Component of the N-terminal acetyltransferase E (NatE)/HYPK complex at least composed of NAA10, NAA15, NAA50 and HYPK. In complex with NAA15, interacts with HYPK; the interaction with HYPK reduces the capacity of the NatA complex to interact with NAA50. Interacts with HIF1A (via its ODD domain); the interaction increases HIF1A protein stability during normoxia, an down-regulates it when induced by hypoxia. Interacts with the ribosome. Binds to MYLK. Interacts with NAA16. Interacts (via its C-terminal domain) with TSC2, leading to its acetylation. Interacts with IKBKB. Interacts with HSPA1A and HSPA1B leading to its acetylation. Post-translationally, cleaved by caspases during apoptosis. Phosphorylation by IKBKB/IKKB at Ser-209 promotes its proteasome-mediated degradation. In terms of processing, autoacetylated at Lys-136 which stimulates its catalytic activity. Ubiquitous.

Its subcellular location is the cytoplasm. It is found in the nucleus. The catalysed reaction is N-terminal glycyl-[protein] + acetyl-CoA = N-terminal N(alpha)-acetylglycyl-[protein] + CoA + H(+). The enzyme catalyses N-terminal L-alanyl-[protein] + acetyl-CoA = N-terminal N(alpha)-acetyl-L-alanyl-[protein] + CoA + H(+). It carries out the reaction N-terminal L-seryl-[protein] + acetyl-CoA = N-terminal N(alpha)-acetyl-L-seryl-[protein] + CoA + H(+). It catalyses the reaction N-terminal L-valyl-[protein] + acetyl-CoA = N-terminal N(alpha)-acetyl-L-valyl-[protein] + CoA + H(+). The catalysed reaction is N-terminal L-cysteinyl-[protein] + acetyl-CoA = N-terminal N(alpha)-acetyl-L-cysteinyl-[protein] + CoA + H(+). The enzyme catalyses N-terminal L-threonyl-[protein] + acetyl-CoA = N-terminal N(alpha)-acetyl-L-threonyl-[protein] + CoA + H(+). In terms of biological role, catalytic subunit of N-terminal acetyltransferase complexes which display alpha (N-terminal) acetyltransferase activity. Acetylates amino termini that are devoid of initiator methionine. The alpha (N-terminal) acetyltransferase activity may be important for vascular, hematopoietic and neuronal growth and development. Without NAA15, displays epsilon (internal) acetyltransferase activity towards HIF1A, thereby promoting its degradation. Represses MYLK kinase activity by acetylation, and thus represses tumor cell migration. Acetylates, and stabilizes TSC2, thereby repressing mTOR activity and suppressing cancer development. Acetylates HSPA1A and HSPA1B at 'Lys-77' which enhances its chaperone activity and leads to preferential binding to co-chaperone HOPX. Acetylates HIST1H4A. Acts as a negative regulator of sister chromatid cohesion during mitosis. This Homo sapiens (Human) protein is N-alpha-acetyltransferase 10 (NAA10).